The chain runs to 255 residues: Snake venom serine protease HS112 (255 aa).

Residues 1 to 18 (MVLIRVIANLLILQLSYA) form the signal peptide. A propeptide spanning residues 19–24 (QKSSEL) is cleaved from the precursor. The region spanning 25-246 (VIGGDECDIN…YLPWIQSIIA (222 aa)) is the Peptidase S1 domain. Intrachain disulfides connect Cys-31–Cys-162, Cys-49–Cys-65, Cys-97–Cys-253, Cys-141–Cys-207, Cys-173–Cys-186, and Cys-197–Cys-222. Catalysis depends on charge relay system residues His-64 and Asp-109. Asn-169 carries N-linked (GlcNAc...) asparagine glycosylation. Ser-201 (charge relay system) is an active-site residue. Asn-248 carries an N-linked (GlcNAc...) asparagine glycan.

This sequence belongs to the peptidase S1 family. Snake venom subfamily. In terms of assembly, monomer. As to expression, expressed by the venom gland.

It is found in the secreted. Its function is as follows. Snake venom serine protease that may act in the hemostasis system of the prey. This Bothrops jararaca (Jararaca) protein is Snake venom serine protease HS112.